We begin with the raw amino-acid sequence, 120 residues long: NAD(P)H-quinone oxidoreductase subunit 3 (120 aa).

The next 3 helical transmembrane spans lie at 7–27 (YEYF…SLTA), 64–84 (MFAL…PWAV), and 89–109 (LGLL…VALV).

The protein belongs to the complex I subunit 3 family. As to quaternary structure, NDH-1 can be composed of about 15 different subunits; different subcomplexes with different compositions have been identified which probably have different functions.

It is found in the cellular thylakoid membrane. The catalysed reaction is a plastoquinone + NADH + (n+1) H(+)(in) = a plastoquinol + NAD(+) + n H(+)(out). It carries out the reaction a plastoquinone + NADPH + (n+1) H(+)(in) = a plastoquinol + NADP(+) + n H(+)(out). Functionally, NDH-1 shuttles electrons from an unknown electron donor, via FMN and iron-sulfur (Fe-S) centers, to quinones in the respiratory and/or the photosynthetic chain. The immediate electron acceptor for the enzyme in this species is believed to be plastoquinone. Couples the redox reaction to proton translocation, and thus conserves the redox energy in a proton gradient. Cyanobacterial NDH-1 also plays a role in inorganic carbon-concentration. In Microcystis aeruginosa (strain NIES-843 / IAM M-2473), this protein is NAD(P)H-quinone oxidoreductase subunit 3.